Consider the following 512-residue polypeptide: uncharacterized protein (512 aa).

12 consecutive transmembrane segments (helical) span residues 25 to 45 (GFYT…VICA), 55 to 75 (LLYP…PLIL), 96 to 116 (LVVC…VFLA), 123 to 143 (VVTG…LPAV), 148 to 168 (LLLT…LVIV), 183 to 203 (LLWL…FVGP), 238 to 258 (MTTY…SLRA), 263 to 283 (GSLH…SMLW), 294 to 314 (GLLL…MVAE), 329 to 349 (FLLA…WISV), 359 to 379 (LICV…VALG), and 386 to 406 (ATIW…VASL). Residues 428–512 (YRPATPNPIH…APLDAGQRIA (85 aa)) are disordered.

Its subcellular location is the cell membrane. This is an uncharacterized protein from Mycobacterium tuberculosis (strain CDC 1551 / Oshkosh).